Here is a 497-residue protein sequence, read N- to C-terminus: Ankyrin repeat domain-containing protein 53 (497 aa).

Over residues 1-10 the composition is skewed to basic residues; sequence MRRPSRRRSK. The interval 1 to 65 is disordered; that stretch reads MRRPSRRRSK…VSSPNSESSQ (65 aa). Residues 12–27 show a composition bias toward low complexity; that stretch reads STPPRSHTTPRRTGPS. Positions 28-39 are enriched in basic and acidic residues; that stretch reads DSRRRPGTKEQP. ANK repeat units lie at residues 110–140, 144–177, and 181–210; these read KGFTAIHFAAQKCQLSCLKVLIEEYKYPVDL, KGQTPLHLVIHKNNKSDILPCIDYLLKKGAAINS, and NGSTPLHLASCNGLLGCIKLLVQSGANVHA. Residues 239-264 adopt a coiled-coil conformation; the sequence is WKHDKKVLAQEMEKLRTLKEKLTILE.

In terms of assembly, interacts with PSRC1; recruited by PSRC1 to the spindle during mitosis. Post-translationally, phosphorylated during mitosis.

It is found in the cytoplasm. The protein resides in the cytoskeleton. Its subcellular location is the spindle. The protein localises to the spindle pole. Functionally, required for normal progression through mitosis. Involved in chromosome alignment and cytokinesis via regulation of microtubules polymerization. This is Ankyrin repeat domain-containing protein 53 (Ankrd53) from Mus musculus (Mouse).